Consider the following 134-residue polypeptide: Transcription antitermination protein NusB (134 aa).

It belongs to the NusB family.

Involved in transcription antitermination. Required for transcription of ribosomal RNA (rRNA) genes. Binds specifically to the boxA antiterminator sequence of the ribosomal RNA (rrn) operons. This Shewanella sp. (strain W3-18-1) protein is Transcription antitermination protein NusB.